The sequence spans 159 residues: NADH-quinone oxidoreductase subunit I (159 aa).

4Fe-4S ferredoxin-type domains follow at residues 51–80 (RRYE…IEAD) and 90–119 (TRYD…EGPN). The [4Fe-4S] cluster site is built by Cys-60, Cys-63, Cys-66, Cys-70, Cys-99, Cys-102, Cys-105, and Cys-109.

This sequence belongs to the complex I 23 kDa subunit family. In terms of assembly, NDH-1 is composed of 14 different subunits. Subunits NuoA, H, J, K, L, M, N constitute the membrane sector of the complex. It depends on [4Fe-4S] cluster as a cofactor.

It localises to the cell inner membrane. It catalyses the reaction a quinone + NADH + 5 H(+)(in) = a quinol + NAD(+) + 4 H(+)(out). Its function is as follows. NDH-1 shuttles electrons from NADH, via FMN and iron-sulfur (Fe-S) centers, to quinones in the respiratory chain. The immediate electron acceptor for the enzyme in this species is believed to be ubiquinone. Couples the redox reaction to proton translocation (for every two electrons transferred, four hydrogen ions are translocated across the cytoplasmic membrane), and thus conserves the redox energy in a proton gradient. The polypeptide is NADH-quinone oxidoreductase subunit I (Rickettsia felis (strain ATCC VR-1525 / URRWXCal2) (Rickettsia azadi)).